We begin with the raw amino-acid sequence, 143 residues long: Large ribosomal subunit protein uL15 (143 aa).

The tract at residues 1–56 is disordered; the sequence is MELNSIKPAEGSKHAKRRVGRGIGSGLGKTAGRGHKGQKSRSGGYHKVGFEGGQMP. Positions 21–31 are enriched in gly residues; sequence RGIGSGLGKTA.

Belongs to the universal ribosomal protein uL15 family. In terms of assembly, part of the 50S ribosomal subunit.

Functionally, binds to the 23S rRNA. This chain is Large ribosomal subunit protein uL15, found in Delftia acidovorans (strain DSM 14801 / SPH-1).